The following is a 419-amino-acid chain: 1,4-beta-D-glucan cellobiohydrolase CEL6B (419 aa).

A signal peptide spans 1–47 (MGESFLLLQPASPALSPTPSSLLLGPTITMRADVLIAALATGALVAA). Substrate-binding residues include Trp111 and Ser113. Residues Asp152 and Asp199 each act as proton donor in the active site. Residue Trp247 coordinates substrate. Asn284 carries an N-linked (GlcNAc...) asparagine glycan. Asn287 provides a ligand contact to substrate. Asn298 carries an N-linked (GlcNAc...) asparagine glycan. Residue Trp347 participates in substrate binding. The N-linked (GlcNAc...) asparagine glycan is linked to Asn364. Residues Lys375 and Glu379 each coordinate substrate.

This sequence belongs to the glycosyl hydrolase 6 (cellulase B) family. Both N- and O-glycosylated.

The protein resides in the secreted. It carries out the reaction Hydrolysis of (1-&gt;4)-beta-D-glucosidic linkages in cellulose and cellotetraose, releasing cellobiose from the non-reducing ends of the chains.. In terms of biological role, exoglucanase that plays an important function in biomass degradation by catalyzing the hydrolysis of the non-reducing end beta-1,4-glucosidic linkages in cellulose and cellotetraose to release cellobiose. Hydrolyzes crystalline and amorphous cellulose but is inactive on hydroxyethyl cellulose, mannan, galactomannan, xyloglucan, arabinoxylan, arabinan, xylan, and pectin. This chain is 1,4-beta-D-glucan cellobiohydrolase CEL6B, found in Podospora anserina (strain S / ATCC MYA-4624 / DSM 980 / FGSC 10383) (Pleurage anserina).